The following is a 549-amino-acid chain: Glucose-6-phosphate isomerase (549 aa).

Glu-353 serves as the catalytic Proton donor. Residues His-384 and Lys-513 contribute to the active site.

This sequence belongs to the GPI family.

The protein localises to the cytoplasm. The enzyme catalyses alpha-D-glucose 6-phosphate = beta-D-fructose 6-phosphate. Its pathway is carbohydrate biosynthesis; gluconeogenesis. It functions in the pathway carbohydrate degradation; glycolysis; D-glyceraldehyde 3-phosphate and glycerone phosphate from D-glucose: step 2/4. Catalyzes the reversible isomerization of glucose-6-phosphate to fructose-6-phosphate. This chain is Glucose-6-phosphate isomerase, found in Brucella canis (strain ATCC 23365 / NCTC 10854 / RM-666).